The following is a 549-amino-acid chain: MAKTIEFDETARRKLLSGVNKLANAVKVTLGPKGRNVVIDKKFGSPTITKDGVTVAKEIELEDAIENMGAQMVKEVSTKTNDIAGDGTTTATILAQAIINEGLKNVTAGANPMALKHGIDKAVVVAVEEIKKHAIKINSKAEYANVATISANNDPEIGNLIAQAFDKVGKEGVITVDEAKSIETTLDIVEGMQFDRGYVSPYMVTDPEAMIATFNDPFILIYDKKIASMKDLLPVLEKIAQAGRPLVIIAEEVEGEALATIVVNTLRKTIQCVAVKAPGFGDRRKAMLEDIAILTGGQVISEDLGMKLENADVKMLGRAKKVVVDKENTTIIEGAGASKDIQGRVNQIKKQIEDTTSDYDREKLQERLAKLAGGVAVIHVGAATEVEMKEKKARVEDALSATRAAVEEGIVPGGGLTLLRAQDAVKALKLVGDEQTGANIILRALEEPIRMITSNAGLEGSVIVEQARARKGNEGFNALTMVWEDLIKAGVVDPAKVVRSALQNAASIGAMILTTEVTITDKPEPKDASGAGMGGMGGMGGMGGMGGMM.

Residues 29–32, Lys-50, 86–90, Gly-414, 477–479, and Asp-493 contribute to the ATP site; these read TLGP, DGTTT, and NAL.

Belongs to the chaperonin (HSP60) family. In terms of assembly, forms a cylinder of 14 subunits composed of two heptameric rings stacked back-to-back. Interacts with the co-chaperonin GroES.

The protein resides in the cytoplasm. It carries out the reaction ATP + H2O + a folded polypeptide = ADP + phosphate + an unfolded polypeptide.. In terms of biological role, together with its co-chaperonin GroES, plays an essential role in assisting protein folding. The GroEL-GroES system forms a nano-cage that allows encapsulation of the non-native substrate proteins and provides a physical environment optimized to promote and accelerate protein folding. This chain is Chaperonin GroEL, found in Leptospira biflexa serovar Patoc (strain Patoc 1 / Ames).